Here is a 424-residue protein sequence, read N- to C-terminus: Tyrosine--tRNA ligase (424 aa).

Y37 is a binding site for L-tyrosine. The 'HIGH' region motif lies at 42–51 (PTADSLHIGS). Y174 and Q178 together coordinate L-tyrosine. Residues 234–238 (KFGKT) carry the 'KMSKS' region motif. Residue K237 participates in ATP binding. The S4 RNA-binding domain maps to 357–422 (SGLIDALAAG…RGKKLYALVD (66 aa)).

This sequence belongs to the class-I aminoacyl-tRNA synthetase family. TyrS type 1 subfamily. Homodimer.

It is found in the cytoplasm. The enzyme catalyses tRNA(Tyr) + L-tyrosine + ATP = L-tyrosyl-tRNA(Tyr) + AMP + diphosphate + H(+). Catalyzes the attachment of tyrosine to tRNA(Tyr) in a two-step reaction: tyrosine is first activated by ATP to form Tyr-AMP and then transferred to the acceptor end of tRNA(Tyr). The chain is Tyrosine--tRNA ligase from Chromobacterium violaceum (strain ATCC 12472 / DSM 30191 / JCM 1249 / CCUG 213 / NBRC 12614 / NCIMB 9131 / NCTC 9757 / MK).